The primary structure comprises 186 residues: Pyridoxal 5'-phosphate synthase subunit PdxT (186 aa).

46–48 serves as a coordination point for L-glutamine; the sequence is GES. Cysteine 75 serves as the catalytic Nucleophile. Residues arginine 101 and 129-130 contribute to the L-glutamine site; that span reads IR. Active-site charge relay system residues include histidine 165 and glutamate 167.

The protein belongs to the glutaminase PdxT/SNO family. In the presence of PdxS, forms a dodecamer of heterodimers. Only shows activity in the heterodimer.

It catalyses the reaction aldehydo-D-ribose 5-phosphate + D-glyceraldehyde 3-phosphate + L-glutamine = pyridoxal 5'-phosphate + L-glutamate + phosphate + 3 H2O + H(+). The catalysed reaction is L-glutamine + H2O = L-glutamate + NH4(+). Its pathway is cofactor biosynthesis; pyridoxal 5'-phosphate biosynthesis. Catalyzes the hydrolysis of glutamine to glutamate and ammonia as part of the biosynthesis of pyridoxal 5'-phosphate. The resulting ammonia molecule is channeled to the active site of PdxS. This Staphylococcus aureus (strain Mu3 / ATCC 700698) protein is Pyridoxal 5'-phosphate synthase subunit PdxT.